A 428-amino-acid chain; its full sequence is UDP-N-acetylglucosamine 1-carboxyvinyltransferase 2 (428 aa).

22–23 is a binding site for phosphoenolpyruvate; the sequence is KN. Arg92 provides a ligand contact to UDP-N-acetyl-alpha-D-glucosamine. Catalysis depends on Cys116, which acts as the Proton donor. Residue Cys116 is modified to 2-(S-cysteinyl)pyruvic acid O-phosphothioketal. UDP-N-acetyl-alpha-D-glucosamine contacts are provided by residues 121-125, Asp304, and Ile326; that span reads RPIDQ.

Belongs to the EPSP synthase family. MurA subfamily.

The protein localises to the cytoplasm. The enzyme catalyses phosphoenolpyruvate + UDP-N-acetyl-alpha-D-glucosamine = UDP-N-acetyl-3-O-(1-carboxyvinyl)-alpha-D-glucosamine + phosphate. It participates in cell wall biogenesis; peptidoglycan biosynthesis. Functionally, cell wall formation. Adds enolpyruvyl to UDP-N-acetylglucosamine. The chain is UDP-N-acetylglucosamine 1-carboxyvinyltransferase 2 from Shouchella clausii (strain KSM-K16) (Alkalihalobacillus clausii).